The primary structure comprises 387 residues: uncharacterized protein (387 aa).

It belongs to the geranylgeranyl reductase family. ChlP subfamily.

This is an uncharacterized protein from Methanocaldococcus jannaschii (strain ATCC 43067 / DSM 2661 / JAL-1 / JCM 10045 / NBRC 100440) (Methanococcus jannaschii).